The primary structure comprises 119 residues: Ornithodorin (119 aa).

The BPTI/Kunitz inhibitor 1 domain occupies 1-53 (LNVLCNNPHTADCNNDAQVDRYFREGTTCLMSPACTSEGYASQHECQQACFVG). 3 disulfides stabilise this stretch: cysteine 5/cysteine 50, cysteine 13/cysteine 35, and cysteine 29/cysteine 46. The linker stretch occupies residues 54–60 (GEDHSSE). The region spanning 61–116 (MHSSCLGDPPTSCAEGTDITYYDSDSKTCKVLAASCPSGENTFESEVECQVACGAP) is the BPTI/Kunitz inhibitor 2 domain. 3 disulfides stabilise this stretch: cysteine 65/cysteine 113, cysteine 73/cysteine 96, and cysteine 89/cysteine 109.

As to expression, expressed in salivary glands.

It is found in the cytoplasmic vesicle. It localises to the secretory vesicle. The protein resides in the secreted. Its function is as follows. Tick salivary thrombin inhibitor that plays an important part in the anti-hemostatic strategy of ticks. Is a potent and highly selective thrombin inhibitor (Ki=10 pM). The protein is Ornithodorin of Ornithodoros moubata (Soft tick).